The chain runs to 98 residues: Defensin-like protein 192 (98 aa).

An N-terminal signal peptide occupies residues 1–27; sequence MATKSVSTFAIFFILVLAIFETPEIEA. 4 disulfide bridges follow: cysteine 32-cysteine 86, cysteine 45-cysteine 69, cysteine 54-cysteine 81, and cysteine 58-cysteine 83.

The protein belongs to the DEFL family. Protease inhibitor I18 (RTI/MTI-2) subfamily.

The protein resides in the secreted. The protein is Defensin-like protein 192 (ATTI7) of Arabidopsis thaliana (Mouse-ear cress).